The following is a 322-amino-acid chain: Protein-L-isoaspartate O-methyltransferase (322 aa).

Residues 1–101 (MSGERAKRFP…AKQGDRSAAP (101 aa)) form a disordered region. Positions 14-29 (EDLKREPRKPEGRVAE) are enriched in basic and acidic residues. Low complexity-rich tracts occupy residues 33–51 (AGDA…PAAA) and 76–91 (HAPA…PQGG). Ser-170 is a catalytic residue.

Belongs to the methyltransferase superfamily. L-isoaspartyl/D-aspartyl protein methyltransferase family.

The protein localises to the cytoplasm. The enzyme catalyses [protein]-L-isoaspartate + S-adenosyl-L-methionine = [protein]-L-isoaspartate alpha-methyl ester + S-adenosyl-L-homocysteine. Catalyzes the methyl esterification of L-isoaspartyl residues in peptides and proteins that result from spontaneous decomposition of normal L-aspartyl and L-asparaginyl residues. It plays a role in the repair and/or degradation of damaged proteins. This is Protein-L-isoaspartate O-methyltransferase from Burkholderia mallei (strain NCTC 10247).